A 275-amino-acid chain; its full sequence is MKNWIVGMVALVTMVPVMAATPWQKITHPVAGSPQSIGGFANGCVIGAQPLPLESADYQVMRSDQRRYFGHPDLLNFIHRLSAQTHQQQLGTVLIGDMAMPAGGRFSSGHASHQSGLDVDIWLQLPKQRWSQQQLLKPQPIDLVAVDGKRVIPALWQPQIESLIKLAAKDNDVTRIFVNPAIKKQLCLDAGADRQWLHKVRPWFAHRAHMHVRLRCPANSLECVDQDTPPPGDGCGAELESWFQPPPPSAKPGKTLPPPLPPSCQALLDNHFATE.

Residues 1–19 (MKNWIVGMVALVTMVPVMA) form the signal peptide. Intrachain disulfides connect cysteine 44–cysteine 264, cysteine 187–cysteine 235, and cysteine 216–cysteine 223. 5 residues coordinate Zn(2+): histidine 110, histidine 113, aspartate 120, aspartate 147, and histidine 211. Residues 227–262 (DTPPPGDGCGAELESWFQPPPPSAKPGKTLPPPLPP) are disordered. Pro residues predominate over residues 244–262 (QPPPPSAKPGKTLPPPLPP).

The protein belongs to the peptidase M74 family. Dimer. Zn(2+) is required as a cofactor.

The protein resides in the periplasm. Murein endopeptidase that cleaves the D-alanyl-meso-2,6-diamino-pimelyl amide bond that connects peptidoglycan strands. Likely plays a role in the removal of murein from the sacculus. The polypeptide is Penicillin-insensitive murein endopeptidase (Yersinia pestis).